The following is a 380-amino-acid chain: Kappa-type opioid receptor (380 aa).

At 1-57 (MGRRRQGPAQPASELPARNACLLPNGSAWLPGWAEPDGNGSAGPQDEQLEPAHISPA) the chain is on the extracellular side. Residues asparagine 25 and asparagine 39 are each glycosylated (N-linked (GlcNAc...) asparagine). The helical transmembrane segment at 58-85 (IPVIITAVYSVVFVVGLVGNSLVMFVII) threads the bilayer. At 86-95 (RYTKMKTATN) the chain is on the cytoplasmic side. Residues 96–119 (IYIFNLALADALVTTTMPFQSTVY) form a helical membrane-spanning segment. Residues 120–132 (LMNSWPFGDVLCK) are Extracellular-facing. A disulfide bridge connects residues cysteine 131 and cysteine 210. A helical transmembrane segment spans residues 133-154 (IVISIDYYNMFTSIFTLTMMSV). The Cytoplasmic portion of the chain corresponds to 155 to 173 (DRYIAVCHPVKALDFRTPL). Residues 174-196 (KAKIINICIWLLSSSVGISAIIL) form a helical membrane-spanning segment. Over 197-222 (GGTKVREDVDIIECSLQFPDDDYSWW) the chain is Extracellular. The chain crosses the membrane as a helical span at residues 223–247 (DLFMKICVFVFAFVIPVLIIIVCYT). The Cytoplasmic portion of the chain corresponds to 248–274 (LMILRLKSVRLLSGSREKDRNLRRITR). The chain crosses the membrane as a helical span at residues 275-296 (LVLVVVAVFIICWTPIHIFILV). The Extracellular segment spans residues 297 to 311 (EALGSTSHSTAALSS). A helical membrane pass occupies residues 312 to 333 (YYFCIALGYTNSSLNPILYAFL). Topologically, residues 334–380 (DENFKRCFRDFCFPIKMRMERQSTSRVRNTVQDPAYMRNVDGVNKPV) are cytoplasmic. The S-palmitoyl cysteine moiety is linked to residue cysteine 345.

This sequence belongs to the G-protein coupled receptor 1 family. As to quaternary structure, interacts with NHERF1. Interacts with GABARAPL1.

The protein localises to the cell membrane. Its function is as follows. G-protein coupled opioid receptor that functions as a receptor for endogenous alpha-neoendorphins and dynorphins, but has low affinity for beta-endorphins. Also functions as a receptor for various synthetic opioids and for the psychoactive diterpene salvinorin A. Ligand binding causes a conformation change that triggers signaling via guanine nucleotide-binding proteins (G proteins) and modulates the activity of down-stream effectors, such as adenylate cyclase. Signaling leads to the inhibition of adenylate cyclase activity. Inhibits neurotransmitter release by reducing calcium ion currents and increasing potassium ion conductance. Plays a role in the perception of pain. Plays a role in mediating reduced physical activity upon treatment with synthetic opioids. Plays a role in the regulation of salivation in response to synthetic opioids. May play a role in arousal and regulation of autonomic and neuroendocrine functions. The sequence is that of Kappa-type opioid receptor (OPRK1) from Cavia porcellus (Guinea pig).